Reading from the N-terminus, the 67-residue chain is Probable archaeal histone 3 (67 aa).

2 interaction with DNA regions span residues 20-22 and 54-57; these read RVS and KTVK.

It belongs to the archaeal histone HMF family. Homodimer or heterodimer with another histone. Dimers then assemble into higher oligomers, with the DNA wrapped around the protein core.

It localises to the cytoplasm. Its subcellular location is the chromosome. Its function is as follows. Binds and compact DNA (95 to 150 base pairs) to form nucleosome-like structures that contain positive DNA supercoils. Increases the resistance of DNA to thermal denaturation (in vitro). The sequence is that of Probable archaeal histone 3 from Methanocaldococcus jannaschii (strain ATCC 43067 / DSM 2661 / JAL-1 / JCM 10045 / NBRC 100440) (Methanococcus jannaschii).